A 165-amino-acid chain; its full sequence is Small ribosomal subunit protein uS5 (165 aa).

Positions 10 to 73 constitute an S5 DRBM domain; sequence LNEKLIAVNR…EKARRNMVTV (64 aa).

Belongs to the universal ribosomal protein uS5 family. As to quaternary structure, part of the 30S ribosomal subunit. Contacts proteins S4 and S8.

With S4 and S12 plays an important role in translational accuracy. In terms of biological role, located at the back of the 30S subunit body where it stabilizes the conformation of the head with respect to the body. The protein is Small ribosomal subunit protein uS5 of Photobacterium profundum (strain SS9).